The primary structure comprises 405 residues: MAVKTLKDLLDEGVDGRHVIVRSDFNVPLNDDREITDKGRIIASLPTLKALTEAGAKVIVMSHLGRPKGEVNEKYSLAPVAEALSDELGQYVALAADVVGEDAHERANGLTEGDILLLENVRFDPRETSKDEAERGAFADELAALAADNGAFVSDGFGVVHRAQTSVYDIAKRLPHYAGRLVENEISVLEKIAENPEAPYTVVLGGSKVSDKLGVIEALASKADSIIIGGGMCYTFLKAQGHDVQKSMLQDEMIDTCKDLLERFGDKIVLPVDLTWASEFAKDAEKKVTDLDSAPEGWLSLDIGPKSVEKFADVLGASKTIFWNGPMGVFEFEAFSDGTRGVAQAIIDATANNGAFSVVGGGDSAASVRVLGLDEEGFSHISTGGGASLEFLEGKELPGVAILKD.

Residues D24–N26, R40, H63–R66, R122, and R162 each bind substrate. ATP-binding positions include K212, E331, and G361–S364.

Belongs to the phosphoglycerate kinase family. As to quaternary structure, monomer.

It localises to the cytoplasm. It catalyses the reaction (2R)-3-phosphoglycerate + ATP = (2R)-3-phospho-glyceroyl phosphate + ADP. It functions in the pathway carbohydrate degradation; glycolysis; pyruvate from D-glyceraldehyde 3-phosphate: step 2/5. The sequence is that of Phosphoglycerate kinase from Corynebacterium efficiens (strain DSM 44549 / YS-314 / AJ 12310 / JCM 11189 / NBRC 100395).